Here is a 710-residue protein sequence, read N- to C-terminus: Protein Smaug homolog 1 (710 aa).

2 disordered regions span residues 276–319 (ARGS…FQDE) and 441–476 (NQAT…ESDL). A compositionally biased stretch (polar residues) spans 309-318 (QSTACNTFQD). Residues 319–379 (EGSGMKDVPA…KIVISIQKLK (61 aa)) form the SAM domain.

The protein belongs to the SMAUG family.

It is found in the cytoplasm. Its subcellular location is the cell projection. It localises to the dendrite. The protein localises to the synapse. The protein resides in the synaptosome. Its function is as follows. Acts as a translational repressor. In Xenopus laevis (African clawed frog), this protein is Protein Smaug homolog 1 (samd4a).